The sequence spans 59 residues: Temporin-HN2 (59 aa).

The first 22 residues, 1–22 (MFTLKKSLLLLLFLGTINLSLS), serve as a signal peptide directing secretion. A coiled-coil region spans residues 16–44 (TINLSLSEQERDAKEERRDEMDVEVEKRN). The propeptide occupies 23–41 (EQERDAKEERRDEMDVEVE). A Leucine amide modification is found at leucine 57.

In terms of tissue distribution, expressed by the skin glands.

It localises to the secreted. In terms of biological role, has antimicrobial activity against some Gram-positive bacteria and fungi but has no activity against a range of Gram-negative bacteria except P.faecalis. Active against the Gram-positive bacteria S.aureus ATCC 25923 (MIC=4.8 uM), S.carnosus KHS (MIC=19 uM), B.licheniformis X39 (MIC=19 uM) and R.rhodochrous X15 (MIC=2.4 uM) but is inactive against E.faecium 091299 and E.faecalis 981. Has a less potent antimicrobial activity against the Gram-negative bacterium P.faecalis X29 (MIC=37.5 uM) and is inactive against E.coli, P.aeruginosa and S.typhi. Has antifungal activity against C.albicans ATCC 2002 (MIC=9.5 uM) and is also active against the slime mold 090223 (MIC=9.5 uM). Has extremely low hemolytic activity against human erythrocytes (LC(50)=300 uM). This chain is Temporin-HN2, found in Odorrana hainanensis (Odor frog).